The primary structure comprises 222 residues: UPF0688 protein C1orf174 homolog (222 aa).

2 disordered regions span residues 23–57 (STSL…RTSK) and 98–158 (EDGA…EPVP). Residues 33–48 (ASSTSAKTTCLASSSH) show a composition bias toward polar residues. Basic and acidic residues predominate over residues 121 to 131 (VSEEPSVKAEE). Ser172 is subject to Phosphoserine.

Belongs to the UPF0688 family.

The protein localises to the nucleus. The polypeptide is UPF0688 protein C1orf174 homolog (Rattus norvegicus (Rat)).